The primary structure comprises 300 residues: Epimerase family protein SAB0724c (300 aa).

The protein belongs to the NAD(P)-dependent epimerase/dehydratase family. SDR39U1 subfamily.

In Staphylococcus aureus (strain bovine RF122 / ET3-1), this protein is Epimerase family protein SAB0724c.